Here is a 309-residue protein sequence, read N- to C-terminus: Methionyl-tRNA formyltransferase (309 aa).

A (6S)-5,6,7,8-tetrahydrofolate-binding site is contributed by 110–113 (SLLP).

It belongs to the Fmt family.

It carries out the reaction L-methionyl-tRNA(fMet) + (6R)-10-formyltetrahydrofolate = N-formyl-L-methionyl-tRNA(fMet) + (6S)-5,6,7,8-tetrahydrofolate + H(+). Attaches a formyl group to the free amino group of methionyl-tRNA(fMet). The formyl group appears to play a dual role in the initiator identity of N-formylmethionyl-tRNA by promoting its recognition by IF2 and preventing the misappropriation of this tRNA by the elongation apparatus. The sequence is that of Methionyl-tRNA formyltransferase from Caldanaerobacter subterraneus subsp. tengcongensis (strain DSM 15242 / JCM 11007 / NBRC 100824 / MB4) (Thermoanaerobacter tengcongensis).